The following is a 63-amino-acid chain: Non-structural protein 3b (63 aa).

In Avian infectious bronchitis virus (strain UK/68/84) (IBV), this protein is Non-structural protein 3b.